A 303-amino-acid polypeptide reads, in one-letter code: Ribosomal RNA small subunit methyltransferase A (303 aa).

Over residues 1 to 19 the composition is skewed to low complexity; sequence MSSRPPASFSATFSAARSS. Residues 1–34 form a disordered region; sequence MSSRPPASFSATFSAARSSKCVPPPRRPSTDVSL. S-adenosyl-L-methionine is bound by residues H55, L57, G82, E104, D130, and N149.

The protein belongs to the class I-like SAM-binding methyltransferase superfamily. rRNA adenine N(6)-methyltransferase family. RsmA subfamily.

The protein localises to the cytoplasm. It catalyses the reaction adenosine(1518)/adenosine(1519) in 16S rRNA + 4 S-adenosyl-L-methionine = N(6)-dimethyladenosine(1518)/N(6)-dimethyladenosine(1519) in 16S rRNA + 4 S-adenosyl-L-homocysteine + 4 H(+). Specifically dimethylates two adjacent adenosines (A1518 and A1519) in the loop of a conserved hairpin near the 3'-end of 16S rRNA in the 30S particle. May play a critical role in biogenesis of 30S subunits. The polypeptide is Ribosomal RNA small subunit methyltransferase A (Gluconobacter oxydans (strain 621H) (Gluconobacter suboxydans)).